The primary structure comprises 317 residues: Probable cell division protein WhiA (317 aa).

Positions Ser-281–Lys-314 form a DNA-binding region, H-T-H motif.

It belongs to the WhiA family.

Involved in cell division and chromosome segregation. The chain is Probable cell division protein WhiA from Clostridium acetobutylicum (strain ATCC 824 / DSM 792 / JCM 1419 / IAM 19013 / LMG 5710 / NBRC 13948 / NRRL B-527 / VKM B-1787 / 2291 / W).